The primary structure comprises 538 residues: uncharacterized protein (538 aa).

Disordered regions lie at residues 20–71 (RLSA…GGAQ), 151–211 (LWAE…EHPK), 288–331 (MLQP…QQHK), and 458–482 (EFEKASKLTGPGEASSGVGHSLKNY). The segment covering 154 to 171 (ESEKSESKGTRRDFRSYD) has biased composition (basic and acidic residues).

This is an uncharacterized protein from Homo sapiens (Human).